A 140-amino-acid polypeptide reads, in one-letter code: L-fucose mutarotase (140 aa).

His-22 serves as the catalytic Proton donor. Substrate is bound by residues Asp-30, Arg-107, and 129-131; that span reads YGN.

The protein belongs to the RbsD / FucU family. FucU mutarotase subfamily. In terms of assembly, homodecamer.

It is found in the cytoplasm. It catalyses the reaction alpha-L-fucose = beta-L-fucose. It participates in carbohydrate metabolism; L-fucose metabolism. Functionally, involved in the anomeric conversion of L-fucose. In Klebsiella pneumoniae subsp. pneumoniae (strain ATCC 700721 / MGH 78578), this protein is L-fucose mutarotase.